The chain runs to 283 residues: Lolitrem B biosynthesis cluster protein S (283 aa).

A signal peptide spans methionine 1–glycine 27. The next 5 membrane-spanning stretches (helical) occupy residues tryptophan 73–leucine 93, leucine 112–isoleucine 132, isoleucine 157–leucine 177, methionine 219–alanine 239, and valine 250–leucine 270.

It belongs to the ltmS family.

The protein localises to the membrane. Part of the gene cluster that mediates the biosynthesis of lolitrems, indole-diterpene mycotoxins that are potent tremorgens in mammals, and are synthesized by clavicipitaceous fungal endophytes in association with their grass hosts. The geranylgeranyl diphosphate (GGPP) synthase ltmG is proposed to catalyze the first step in lolitrem biosynthesis. LtmG catalyzes a series of iterative condensations of isopentenyl diphosphate (IPP) with dimethylallyl diphosphate (DMAPP), geranyl diphosphate (GPP), and farnesyl diphosphate (FPP), to form GGPP. GGPP then condenses with indole-3-glycerol phosphate to form 3-geranylgeranylindole, an acyclic intermediate, to be incorporated into paxilline. Either ltmG or ltmC could be responsible for this step, as both are putative prenyl transferases. The FAD-dependent monooxygenase ltmM then catalyzes the epoxidation of the two terminal alkenes of the geranylgeranyl moiety, which is subsequently cyclized by ltmB, to paspaline. The cytochrome P450 monooxygenases ltmQ and ltmP can sequentially oxidize paspaline to terpendole E and terpendole F. Alternatively, ltmP converts paspaline to an intermediate which is oxidized by ltmQ to terpendole F. LtmF, ltmK, ltmE and ltmJ appear to be unique to the epichloe endophytes. The prenyltransferase ltmF is involved in the 27-hydroxyl-O-prenylation. The cytochrome P450 monooxygenase ltmK is required for the oxidative acetal ring formation. The multi-functional prenyltransferase ltmE is required for C20- and C21-prenylations of the indole ring of paspalanes and acts together with the cytochrome P450 monooxygenase ltmJ to yield lolitremanes by multiple oxidations and ring closures. The stereoisomer pairs of lolitriol and lolitrem N or lolitrem B and lolitrem F may be attributed to variations in the way in which ring closure can occur under the action of ltmJ. While the major product of this pathway is lolitrem B, the prenyl transferases and cytochrome P450 monooxygenases identified in this pathway have a remarkable versatility in their regio- and stereo-specificities to generate a diverse range of metabolites that are products of a metabolic grid rather than a linear pathway. The chain is Lolitrem B biosynthesis cluster protein S from Epichloe festucae (strain Fl1).